A 160-amino-acid polypeptide reads, in one-letter code: uncharacterized protein (160 aa).

An N-acetyltransferase domain is found at 7–151; the sequence is LLINFKTLEE…NPYIWHPDMD (145 aa).

This is an uncharacterized protein from Bacillus velezensis (strain DSM 23117 / BGSC 10A6 / LMG 26770 / FZB42) (Bacillus amyloliquefaciens subsp. plantarum).